Reading from the N-terminus, the 240-residue chain is Ubiquinone biosynthesis O-methyltransferase (240 aa).

S-adenosyl-L-methionine is bound by residues arginine 44, glycine 64, aspartate 85, and methionine 129.

Belongs to the methyltransferase superfamily. UbiG/COQ3 family.

It catalyses the reaction a 3-demethylubiquinol + S-adenosyl-L-methionine = a ubiquinol + S-adenosyl-L-homocysteine + H(+). The catalysed reaction is a 3-(all-trans-polyprenyl)benzene-1,2-diol + S-adenosyl-L-methionine = a 2-methoxy-6-(all-trans-polyprenyl)phenol + S-adenosyl-L-homocysteine + H(+). The protein operates within cofactor biosynthesis; ubiquinone biosynthesis. O-methyltransferase that catalyzes the 2 O-methylation steps in the ubiquinone biosynthetic pathway. The chain is Ubiquinone biosynthesis O-methyltransferase from Shigella flexneri serotype 5b (strain 8401).